Reading from the N-terminus, the 362-residue chain is Chorismate synthase (362 aa).

2 residues coordinate NADP(+): arginine 48 and arginine 54. FMN is bound by residues 131–133 (RSS), 243–244 (NA), glycine 287, 302–306 (KPTSS), and arginine 328.

Belongs to the chorismate synthase family. As to quaternary structure, homotetramer. It depends on FMNH2 as a cofactor.

The enzyme catalyses 5-O-(1-carboxyvinyl)-3-phosphoshikimate = chorismate + phosphate. It participates in metabolic intermediate biosynthesis; chorismate biosynthesis; chorismate from D-erythrose 4-phosphate and phosphoenolpyruvate: step 7/7. Functionally, catalyzes the anti-1,4-elimination of the C-3 phosphate and the C-6 proR hydrogen from 5-enolpyruvylshikimate-3-phosphate (EPSP) to yield chorismate, which is the branch point compound that serves as the starting substrate for the three terminal pathways of aromatic amino acid biosynthesis. This reaction introduces a second double bond into the aromatic ring system. This chain is Chorismate synthase, found in Rhodopseudomonas palustris (strain BisB18).